The sequence spans 336 residues: tRNA N6-adenosine threonylcarbamoyltransferase (336 aa).

2 residues coordinate Fe cation: H114 and H118. Residues 136 to 140 (LVSGG), D169, G182, D186, and N275 each bind substrate. A Fe cation-binding site is contributed by D301.

Belongs to the KAE1 / TsaD family. The cofactor is Fe(2+).

It localises to the cytoplasm. It carries out the reaction L-threonylcarbamoyladenylate + adenosine(37) in tRNA = N(6)-L-threonylcarbamoyladenosine(37) in tRNA + AMP + H(+). Its function is as follows. Required for the formation of a threonylcarbamoyl group on adenosine at position 37 (t(6)A37) in tRNAs that read codons beginning with adenine. Is involved in the transfer of the threonylcarbamoyl moiety of threonylcarbamoyl-AMP (TC-AMP) to the N6 group of A37, together with TsaE and TsaB. TsaD likely plays a direct catalytic role in this reaction. The protein is tRNA N6-adenosine threonylcarbamoyltransferase of Streptococcus mutans serotype c (strain ATCC 700610 / UA159).